Reading from the N-terminus, the 47-residue chain is Lysis protein for colicin E5 (47 aa).

The N-terminal stretch at 1 to 19 is a signal peptide; it reads MKKITWIILLLLAAIILAA. C20 is lipidated: N-palmitoyl cysteine. Residue C20 is the site of S-diacylglycerol cysteine attachment.

The protein resides in the cell outer membrane. In terms of biological role, lysis proteins are required for both colicin release and partial cell lysis. This chain is Lysis protein for colicin E5 (lys), found in Escherichia coli.